Consider the following 171-residue polypeptide: Putative metal-dependent hydrolase BH0277 (171 aa).

The Zn(2+) site is built by H64, H155, and H159.

It belongs to the metal hydrolase YfiT family. As to quaternary structure, homodimer. Requires Zn(2+) as cofactor.

The protein localises to the cytoplasm. In terms of biological role, possible metal-dependent hydrolase. This Halalkalibacterium halodurans (strain ATCC BAA-125 / DSM 18197 / FERM 7344 / JCM 9153 / C-125) (Bacillus halodurans) protein is Putative metal-dependent hydrolase BH0277.